A 503-amino-acid chain; its full sequence is AMP phosphorylase (503 aa).

Residues Gly168, Ser194 to Ser199, and Thr203 contribute to the AMP site. The active-site Proton donor is Asp256. 2 residues coordinate AMP: Ser264 and Lys288.

The protein belongs to the thymidine/pyrimidine-nucleoside phosphorylase family. Type 2 subfamily.

The enzyme catalyses AMP + phosphate = alpha-D-ribose 1,5-bisphosphate + adenine. It carries out the reaction CMP + phosphate = cytosine + alpha-D-ribose 1,5-bisphosphate. The catalysed reaction is UMP + phosphate = alpha-D-ribose 1,5-bisphosphate + uracil. Catalyzes the conversion of AMP and phosphate to adenine and ribose 1,5-bisphosphate (R15P). Exhibits phosphorylase activity toward CMP and UMP in addition to AMP. Functions in an archaeal AMP degradation pathway, together with R15P isomerase and RubisCO. In Thermococcus sibiricus (strain DSM 12597 / MM 739), this protein is AMP phosphorylase.